The primary structure comprises 310 residues: Proline iminopeptidase (310 aa).

The 258-residue stretch at 33 to 290 folds into the AB hydrolase-1 domain; sequence PVIFLHGGPG…RVVQAGHRAF (258 aa). Serine 107 functions as the Nucleophile in the catalytic mechanism. The active site involves aspartate 260. Catalysis depends on histidine 287, which acts as the Proton donor.

It belongs to the peptidase S33 family.

Its subcellular location is the cytoplasm. It catalyses the reaction Release of N-terminal proline from a peptide.. Specifically catalyzes the removal of N-terminal proline residues from peptides. The sequence is that of Proline iminopeptidase (pip) from Neisseria meningitidis serogroup A / serotype 4A (strain DSM 15465 / Z2491).